Consider the following 59-residue polypeptide: Large ribosomal subunit protein bL32 (59 aa).

Residues 1–16 (MAVPKRKTSPSKRGMR) show a composition bias toward basic residues. The interval 1-59 (MAVPKRKTSPSKRGMRRSADALKAPTYVEDKNSGELRRPHHIDLKSGMYRGRQVLEAKE) is disordered. The span at 28–44 (VEDKNSGELRRPHHIDL) shows a compositional bias: basic and acidic residues.

This sequence belongs to the bacterial ribosomal protein bL32 family.

This chain is Large ribosomal subunit protein bL32, found in Brucella anthropi (strain ATCC 49188 / DSM 6882 / CCUG 24695 / JCM 21032 / LMG 3331 / NBRC 15819 / NCTC 12168 / Alc 37) (Ochrobactrum anthropi).